Here is a 501-residue protein sequence, read N- to C-terminus: Leukocyte receptor cluster member 9 (501 aa).

Disordered stretches follow at residues 1 to 43, 61 to 86, 203 to 234, and 281 to 300; these read MGSR…PAPP, RQPHPGAPAPPGREAQPEAGAKKPPL, GQEAQAAPKRGSTRPLCTGHQEPGVEEPGELE, and QALGVPGGSAETTEAEWGPA. A C3H1-type zinc finger spans residues 40–67; sequence PAPPPACRFFLEGRCRFGARCRQPHPGA.

In Homo sapiens (Human), this protein is Leukocyte receptor cluster member 9 (LENG9).